The chain runs to 250 residues: UPF0246 protein cce_3295 (250 aa).

Belongs to the UPF0246 family.

This is UPF0246 protein cce_3295 from Crocosphaera subtropica (strain ATCC 51142 / BH68) (Cyanothece sp. (strain ATCC 51142)).